The chain runs to 497 residues: MORN repeat-containing protein 1 (497 aa).

Residues 1 to 27 (MAAAGEGTPSSRGPRRDPPRRPPRNGY) form a disordered region. MORN repeat units follow at residues 39–61 (YEGE…DGSY), 62–84 (YEGA…WSGD), 86–108 (FSGQ…AGGC), 109–131 (YEGE…DGQV), 132–154 (YQGS…NGDK), 155–177 (YDGD…DGST), and 178–200 (YKGQ…SGVT). 2 disordered regions span residues 393–425 (GGRS…ATEE) and 468–497 (QPPH…PAPR).

The sequence is that of MORN repeat-containing protein 1 (MORN1) from Homo sapiens (Human).